A 181-amino-acid chain; its full sequence is ATP synthase subunit delta (181 aa).

This sequence belongs to the ATPase delta chain family. In terms of assembly, F-type ATPases have 2 components, F(1) - the catalytic core - and F(0) - the membrane proton channel. F(1) has five subunits: alpha(3), beta(3), gamma(1), delta(1), epsilon(1). F(0) has three main subunits: a(1), b(2) and c(10-14). The alpha and beta chains form an alternating ring which encloses part of the gamma chain. F(1) is attached to F(0) by a central stalk formed by the gamma and epsilon chains, while a peripheral stalk is formed by the delta and b chains.

It is found in the cell membrane. F(1)F(0) ATP synthase produces ATP from ADP in the presence of a proton or sodium gradient. F-type ATPases consist of two structural domains, F(1) containing the extramembraneous catalytic core and F(0) containing the membrane proton channel, linked together by a central stalk and a peripheral stalk. During catalysis, ATP synthesis in the catalytic domain of F(1) is coupled via a rotary mechanism of the central stalk subunits to proton translocation. In terms of biological role, this protein is part of the stalk that links CF(0) to CF(1). It either transmits conformational changes from CF(0) to CF(1) or is implicated in proton conduction. This is ATP synthase subunit delta from Mycoplasma capricolum subsp. capricolum (strain California kid / ATCC 27343 / NCTC 10154).